A 362-amino-acid polypeptide reads, in one-letter code: MRSLNTLLLSLFVAMSSGAPLLKIREEKNSSLPSIKIFGTGGTIASKGSTSATTAGYSVGLTVNDLIEAVPSLAEKANLDYLQVSNVGSNSLNYTHLIPLYHGISEALASDDYAGAVVTHGTDTMEETAFFLDLTINSEKPVCIAGAMRPATATSADGPMNLYQAVSIAASEKSLGRGTMITLNDRIASGFWTTKMNANSLDTFRADEQGYLGYFSNDDVEFYYPPVKPNGWQFFDISNLTDPSEIPEVIILYSYQGLNPELIVKAVKDLGAKGIVLAGSGAGSWTATGSIVNEQLYEEYGIPIVHSRRTADGTVPPDDAPEYAIGSGYLNPQKSRILLQLCLYSGYGMDQIRSVFSGVYGG.

Positions 1–25 (MRSLNTLLLSLFVAMSSGAPLLKIR) are cleaved as a signal peptide. A glycan (N-linked (GlcNAc...) asparagine) is linked at N29. The Asparaginase/glutaminase domain maps to 33-359 (PSIKIFGTGG…DQIRSVFSGV (327 aa)). T43 functions as the O-isoaspartyl threonine intermediate in the catalytic mechanism. S89 is a binding site for substrate. N93 carries N-linked (GlcNAc...) asparagine glycosylation. 122–123 (TD) contributes to the substrate binding site. N-linked (GlcNAc...) asparagine glycosylation occurs at N239.

This sequence belongs to the asparaginase 1 family.

It is found in the secreted. Its subcellular location is the periplasm. It carries out the reaction L-asparagine + H2O = L-aspartate + NH4(+). This chain is L-asparaginase 2-1 (ASP3-1), found in Saccharomyces cerevisiae (strain ATCC 204508 / S288c) (Baker's yeast).